An 88-amino-acid polypeptide reads, in one-letter code: Protein alpha-1 (88 aa).

Residues 38–58 (GFWIILIILLGILAIRIAIKV) form a helical membrane-spanning segment.

It localises to the membrane. The protein is Protein alpha-1 (alpha) of Bos taurus (Bovine).